The chain runs to 342 residues: tRNA N6-adenosine threonylcarbamoyltransferase (342 aa).

Positions 111 and 115 each coordinate Fe cation. Substrate contacts are provided by residues 133–137 (AVSGG), Asp-166, Gly-179, Asp-183, and Asn-273. Asp-301 contacts Fe cation.

The protein belongs to the KAE1 / TsaD family. It depends on Fe(2+) as a cofactor.

It localises to the cytoplasm. The catalysed reaction is L-threonylcarbamoyladenylate + adenosine(37) in tRNA = N(6)-L-threonylcarbamoyladenosine(37) in tRNA + AMP + H(+). Functionally, required for the formation of a threonylcarbamoyl group on adenosine at position 37 (t(6)A37) in tRNAs that read codons beginning with adenine. Is involved in the transfer of the threonylcarbamoyl moiety of threonylcarbamoyl-AMP (TC-AMP) to the N6 group of A37, together with TsaE and TsaB. TsaD likely plays a direct catalytic role in this reaction. This chain is tRNA N6-adenosine threonylcarbamoyltransferase, found in Syntrophotalea carbinolica (strain DSM 2380 / NBRC 103641 / GraBd1) (Pelobacter carbinolicus).